We begin with the raw amino-acid sequence, 118 residues long: MSTVQDYPSRLSRPESRKMGTFSYLPPMGEAEIRRQVEWIVKNGWNPGIEHTEPDFAAQIYWYMWKLPMFGETDVDAILAELKACHEANPGHHVRLIGYDNFTQSQGANMIVYRGTAV.

This sequence belongs to the RuBisCO small chain family. In terms of assembly, heterohexadecamer of 8 large and 8 small subunits.

In terms of biological role, ruBisCO catalyzes two reactions: the carboxylation of D-ribulose 1,5-bisphosphate, the primary event in carbon dioxide fixation, as well as the oxidative fragmentation of the pentose substrate. Both reactions occur simultaneously and in competition at the same active site. Although the small subunit is not catalytic it is essential for maximal activity. This chain is Ribulose bisphosphate carboxylase small subunit, found in Rhodobacter capsulatus (Rhodopseudomonas capsulata).